Reading from the N-terminus, the 218-residue chain is Uracil-DNA glycosylase (218 aa).

Residue Asp-60 is the Proton acceptor of the active site.

It belongs to the uracil-DNA glycosylase (UDG) superfamily. UNG family.

It localises to the cytoplasm. The enzyme catalyses Hydrolyzes single-stranded DNA or mismatched double-stranded DNA and polynucleotides, releasing free uracil.. Excises uracil residues from the DNA which can arise as a result of misincorporation of dUMP residues by DNA polymerase or due to deamination of cytosine. In Francisella philomiragia subsp. philomiragia (strain ATCC 25017 / CCUG 19701 / FSC 153 / O#319-036), this protein is Uracil-DNA glycosylase.